Consider the following 242-residue polypeptide: Probable septum site-determining protein MinC (242 aa).

It belongs to the MinC family. In terms of assembly, interacts with MinD and FtsZ.

Cell division inhibitor that blocks the formation of polar Z ring septums. Rapidly oscillates between the poles of the cell to destabilize FtsZ filaments that have formed before they mature into polar Z rings. Prevents FtsZ polymerization. The protein is Probable septum site-determining protein MinC of Buchnera aphidicola subsp. Schizaphis graminum (strain Sg).